The sequence spans 310 residues: Nucleotide-binding protein BLA_1368 (310 aa).

The interval 1–21 is disordered; that stretch reads MQSARNEQRGTGPESPHAASP. 32-39 contacts ATP; it reads GMSGAGRS. GTP is bound at residue 83–86; the sequence is DVRS.

This sequence belongs to the RapZ-like family.

Functionally, displays ATPase and GTPase activities. The polypeptide is Nucleotide-binding protein BLA_1368 (Bifidobacterium animalis subsp. lactis (strain AD011)).